The primary structure comprises 396 residues: Tryptophan synthase beta chain (396 aa).

Lysine 90 is modified (N6-(pyridoxal phosphate)lysine).

It belongs to the TrpB family. As to quaternary structure, tetramer of two alpha and two beta chains. Requires pyridoxal 5'-phosphate as cofactor.

It carries out the reaction (1S,2R)-1-C-(indol-3-yl)glycerol 3-phosphate + L-serine = D-glyceraldehyde 3-phosphate + L-tryptophan + H2O. It functions in the pathway amino-acid biosynthesis; L-tryptophan biosynthesis; L-tryptophan from chorismate: step 5/5. Functionally, the beta subunit is responsible for the synthesis of L-tryptophan from indole and L-serine. The protein is Tryptophan synthase beta chain of Clostridium kluyveri (strain NBRC 12016).